We begin with the raw amino-acid sequence, 762 residues long: Probable inorganic carbon transporter subunit DabA (762 aa).

Zn(2+)-binding residues include C279, D281, H461, and C476.

It belongs to the inorganic carbon transporter (TC 9.A.2) DabA family. In terms of assembly, forms a complex with DabB. Requires Zn(2+) as cofactor.

It is found in the cell inner membrane. Functionally, part of an energy-coupled inorganic carbon pump. This Legionella pneumophila (strain Lens) protein is Probable inorganic carbon transporter subunit DabA.